Reading from the N-terminus, the 178-residue chain is ATP-dependent protease subunit HslV (178 aa).

Thr7 is an active-site residue. 3 residues coordinate Na(+): Gly162, Cys165, and Thr168.

The protein belongs to the peptidase T1B family. HslV subfamily. In terms of assembly, a double ring-shaped homohexamer of HslV is capped on each side by a ring-shaped HslU homohexamer. The assembly of the HslU/HslV complex is dependent on binding of ATP.

The protein resides in the cytoplasm. It carries out the reaction ATP-dependent cleavage of peptide bonds with broad specificity.. Allosterically activated by HslU binding. Protease subunit of a proteasome-like degradation complex believed to be a general protein degrading machinery. The protein is ATP-dependent protease subunit HslV of Leptothrix cholodnii (strain ATCC 51168 / LMG 8142 / SP-6) (Leptothrix discophora (strain SP-6)).